The primary structure comprises 416 residues: Gamma-glutamyl phosphate reductase (416 aa).

It belongs to the gamma-glutamyl phosphate reductase family.

It is found in the cytoplasm. It catalyses the reaction L-glutamate 5-semialdehyde + phosphate + NADP(+) = L-glutamyl 5-phosphate + NADPH + H(+). The protein operates within amino-acid biosynthesis; L-proline biosynthesis; L-glutamate 5-semialdehyde from L-glutamate: step 2/2. Catalyzes the NADPH-dependent reduction of L-glutamate 5-phosphate into L-glutamate 5-semialdehyde and phosphate. The product spontaneously undergoes cyclization to form 1-pyrroline-5-carboxylate. The chain is Gamma-glutamyl phosphate reductase from Vibrio vulnificus (strain YJ016).